Consider the following 288-residue polypeptide: POU domain class 2-associating factor 2 (288 aa).

The OCA domain occupies 10–32 (KRVYQGVRVKHTVKDLLAEKRSG). Disordered stretches follow at residues 24–52 (DLLA…PFVQ) and 247–274 (PPKV…VKED). Residues 35–48 (SNSRLNGSVSSSQS) are compositionally biased toward low complexity.

Belongs to the POU2AF family. In terms of assembly, interacts with POU2F3 (via the POU domain) in a DNA-dependent manner; this interaction recruits POU2AF2 to chromatin and increases POU2F3 transactivation activity. In terms of tissue distribution, expressed in tuft cells of colon mucosa, as well as in small intestine and thymus.

It localises to the cytoplasm. Its subcellular location is the cytosol. The protein localises to the nucleus. Its function is as follows. Transcriptional coactivator of POU2F3. This complex drives the development of tuft cells, a rare chemosensory cells that coordinate immune and neural functions within mucosal epithelial tissues. In Homo sapiens (Human), this protein is POU domain class 2-associating factor 2.